Consider the following 396-residue polypeptide: Probable 20S rRNA accumulation protein 4 (396 aa).

Belongs to the TSR4 family.

It is found in the cytoplasm. The protein localises to the nucleus. It localises to the nucleolus. Its function is as follows. Required for processing of the 20S pre-rRNA at site D to generate mature 18S rRNA. This chain is Probable 20S rRNA accumulation protein 4, found in Schizosaccharomyces pombe (strain 972 / ATCC 24843) (Fission yeast).